The following is a 215-amino-acid chain: LexA repressor (215 aa).

The H-T-H motif DNA-binding region spans 28 to 48 (RAEIAAELGFSSPNAAEEHLR). Active-site for autocatalytic cleavage activity residues include Ser-133 and Lys-170.

It belongs to the peptidase S24 family. Homodimer.

The enzyme catalyses Hydrolysis of Ala-|-Gly bond in repressor LexA.. Represses a number of genes involved in the response to DNA damage (SOS response), including recA and lexA. In the presence of single-stranded DNA, RecA interacts with LexA causing an autocatalytic cleavage which disrupts the DNA-binding part of LexA, leading to derepression of the SOS regulon and eventually DNA repair. This Burkholderia vietnamiensis (strain G4 / LMG 22486) (Burkholderia cepacia (strain R1808)) protein is LexA repressor.